A 67-amino-acid polypeptide reads, in one-letter code: Probable Sec-independent protein translocase protein TatE (67 aa).

Residues 4-21 (ISITKLLVIAALVVLLFG) traverse the membrane as a helical segment.

The protein belongs to the TatA/E family. TatE subfamily.

The protein localises to the cell inner membrane. Functionally, part of the twin-arginine translocation (Tat) system that transports large folded proteins containing a characteristic twin-arginine motif in their signal peptide across membranes. TatE shares overlapping functions with TatA. The protein is Probable Sec-independent protein translocase protein TatE of Citrobacter rodentium (strain ICC168) (Citrobacter freundii biotype 4280).